The following is a 314-amino-acid chain: NF-kappa-B inhibitor alpha (314 aa).

Positions 1–40 (MFQPAGHGQDWAMEGPRDGLKKERLVDDRHDSGLDSMKDE) are disordered. The span at 15–40 (GPRDGLKKERLVDDRHDSGLDSMKDE) shows a compositional bias: basic and acidic residues. Lysine 21 participates in a covalent cross-link: Glycyl lysine isopeptide (Lys-Gly) (interchain with G-Cter in SUMO); alternate. Lysine 21 participates in a covalent cross-link: Glycyl lysine isopeptide (Lys-Gly) (interchain with G-Cter in ubiquitin); alternate. Lysine 22 participates in a covalent cross-link: Glycyl lysine isopeptide (Lys-Gly) (interchain with G-Cter in ubiquitin). The Destruction motif signature appears at 30 to 36 (HDSGLDS). Phosphoserine; by IKKB is present on serine 32. At serine 36 the chain carries Phosphoserine; by IKKA, IKKB, IKKE and TBK1. Tyrosine 42 carries the phosphotyrosine modification. Residues 45–54 (MVKELREIRL) carry the Nuclear export signal motif. 5 ANK repeats span residues 73–103 (DGDS…DLAF), 110–139 (LQQT…DPEL), 143–172 (RGNT…PQHL), 182–211 (NGHT…DVNA), and 216–245 (NGRT…DVNR). The short motif at 110 to 120 (LQQTPLHLAVI) is the Nuclear import signal element. (3S)-3-hydroxyasparagine; by HIF1AN is present on residues asparagine 210 and asparagine 244. Phosphoserine; by CK2 occurs at positions 283 and 288. Threonine 291 is subject to Phosphothreonine; by CK2. Serine 293 carries the phosphoserine; by CK2 modification. Position 296 is a phosphothreonine (threonine 296).

It belongs to the NF-kappa-B inhibitor family. In terms of assembly, interacts with RELA; the interaction requires the nuclear import signal. Part of a 70-90 kDa complex at least consisting of CHUK, IKBKB, NFKBIA, RELA, ELP1 and MAP3K14. Interacts with NKIRAS1 and NKIRAS2. Interacts with RWDD3; the interaction enhances sumoylation. Interacts with PRMT2. Interacts with PRKACA in platelets; this interaction is disrupted by thrombin and collagen. Interacts with MEFV. Interacts with DDRGK1; positively regulates NFKBIA phosphorylation and degradation. Interacts with HNRNPA2B1; the interaction may be mediated by the RRM2 domain of HNRNPA2B1, and HNRNPA2B1 may interact simultaneously with FAM76B and either NFKBIA or NFKBIE to form a complex. Post-translationally, phosphorylated at Ser-32 and Ser-36 by IKKA/CHUK and IKKB/IKBKB; disables inhibition of NF-kappa-B DNA-binding activity. Phosphorylation at positions 32 and 36 is prerequisite to recognition by the SCF(FBXW11) and SCF(BTRC) complexes, leading to polyubiquitination and subsequent degradation. In terms of processing, polyubiquitinated at Lys-21 and/or Lys-22 following phosphorylation at Ser-32 and Ser-36. Monoubiquitinated at Lys-21 and/or Lys-22 by UBE2D3. Ubiquitin chain elongation is then performed by CDC34 in cooperation with the SCF(FBXW11) E3 ligase complex, building ubiquitin chains from the UBE2D3-primed NFKBIA-linked ubiquitin. The resulting polyubiquitination leads to protein degradation. Also ubiquitinated by the SCF(BTRC) complex following stimulus-dependent phosphorylation at Ser-32 and Ser-36. Deubiquitinated by USP38, leading to NF-kappa-B inhibition. Sumoylated; sumoylation requires the presence of the nuclear import signal. Sumoylation blocks ubiquitination and proteasome-mediated degradation of the protein thereby increasing the protein stability. Post-translationally, hydroxylated by HIF1AN. Highly expressed in lymph node, thymus followed by liver, brain, muscle, kidney, gastrointestinal and reproductive tract.

It is found in the cytoplasm. The protein localises to the nucleus. Functionally, inhibits the activity of dimeric NF-kappa-B/REL complexes by trapping REL (RELA/p65 and NFKB1/p50) dimers in the cytoplasm by masking their nuclear localization signals. On cellular stimulation by immune and pro-inflammatory responses, becomes phosphorylated promoting ubiquitination and degradation, enabling the dimeric RELA to translocate to the nucleus and activate transcription. In Mus musculus (Mouse), this protein is NF-kappa-B inhibitor alpha (Nfkbia).